Consider the following 607-residue polypeptide: Fatty acid amide hydrolase (607 aa).

Residues Lys205 and Ser281 each act as charge relay system in the active site. 302 to 305 contacts substrate; sequence GGGS. The Acyl-ester intermediate role is filled by Ser305.

It belongs to the amidase family. Forms homodimers. In terms of tissue distribution, expressed in roots, leaves and flowers. Expressed in seedlings, flowers, roots, siliques, seeds and leaves.

It is found in the endoplasmic reticulum membrane. The protein localises to the cell membrane. The enzyme catalyses N-(5Z,8Z,11Z,14Z-eicosatetraenoyl)-ethanolamine + H2O = ethanolamine + (5Z,8Z,11Z,14Z)-eicosatetraenoate. The catalysed reaction is N-(9Z,12Z-octadecadienoyl)-ethanolamine + H2O = ethanolamine + (9Z,12Z)-octadecadienoate. It catalyses the reaction N-hexadecanoylethanolamine + H2O = ethanolamine + hexadecanoate. It carries out the reaction N-tetradecanoylethanolamine + H2O = tetradecanoate + ethanolamine. The enzyme catalyses N-dodecanoylethanolamine + H2O = dodecanoate + ethanolamine. Inhibited by methyl arachidonyl fluorophosphonate (MAFP). Functionally, catalyzes the hydrolysis of bioactive endogenous fatty acid amides to their corresponding acids. The hydrolysis of endogenous amidated lipids terminates their participation as lipid mediators in various signaling systems. Converts a wide range of N-acylethanolamines (NAEs) to their corresponding free fatty acids and ethanolamine. Can use oleamide as substrate, but not indole-3-acetamide, 1-naphtalene-acetamide, nicotinic acid amide or L-asparagine. Can use 2-arachidonylglycerol as substrate. Participates in the regulation of plant growth. Hydrolyzes N-dodecanoylethanolamine, which is has a growth inhibitory effect on seedling growth. Involved in plant defense signaling. Involved in abscisic acid (ABA) signaling through mechanisms that are independent of the catalytic activity. Involved in the regulation of flowering time. Catalyzes the hydrolysis of N-acyl L-homoserine lactones (AHLs), which are a class of signaling molecules produced by bacteria for quorum sensing. Accumulation of L-homoserine appears to encourage plant growth at low concentrations by stimulating transpiration, but higher concentrations inhibit growth by stimulating ethylene production. This chain is Fatty acid amide hydrolase, found in Arabidopsis thaliana (Mouse-ear cress).